Reading from the N-terminus, the 421-residue chain is CinA-like protein (421 aa).

The protein belongs to the CinA family.

This is CinA-like protein from Mycobacterium sp. (strain MCS).